A 306-amino-acid polypeptide reads, in one-letter code: Curved DNA-binding protein (306 aa).

In terms of domain architecture, J spans 5–69 (DYYAIMGVKP…QRRAEYDQMW (65 aa)).

Its subcellular location is the cytoplasm. The protein resides in the nucleoid. Its function is as follows. DNA-binding protein that preferentially recognizes a curved DNA sequence. It is probably a functional analog of DnaJ; displays overlapping activities with DnaJ, but functions under different conditions, probably acting as a molecular chaperone in an adaptive response to environmental stresses other than heat shock. Lacks autonomous chaperone activity; binds native substrates and targets them for recognition by DnaK. Its activity is inhibited by the binding of CbpM. The protein is Curved DNA-binding protein of Escherichia coli (strain K12 / MC4100 / BW2952).